A 316-amino-acid polypeptide reads, in one-letter code: Ribosomal protein L11 methyltransferase (316 aa).

Residues threonine 163, glycine 184, aspartate 206, and asparagine 249 each coordinate S-adenosyl-L-methionine.

Belongs to the methyltransferase superfamily. PrmA family.

Its subcellular location is the cytoplasm. It carries out the reaction L-lysyl-[protein] + 3 S-adenosyl-L-methionine = N(6),N(6),N(6)-trimethyl-L-lysyl-[protein] + 3 S-adenosyl-L-homocysteine + 3 H(+). In terms of biological role, methylates ribosomal protein L11. The protein is Ribosomal protein L11 methyltransferase of Pediococcus pentosaceus (strain ATCC 25745 / CCUG 21536 / LMG 10740 / 183-1w).